We begin with the raw amino-acid sequence, 701 residues long: CRS2-associated factor 1, chloroplastic (701 aa).

A chloroplast-targeting transit peptide spans Met-1 to Arg-77. CRM domains follow at residues Glu-183–Ile-279 and Asp-301–Leu-397. The CRS2 binding stretch occupies residues Gly-581–Phe-603.

Interacts with CRS2 and RNA. Part of large ribonucleo-protein complexes that include group IIB introns, CRS2 and CAF1.

The protein localises to the plastid. Its subcellular location is the chloroplast stroma. Required for the splicing of group IIB introns in chloroplasts. Forms splicing particles with CRS2. Interacts with RNA and confers intron specificity of the splicing particles. In Oryza sativa subsp. japonica (Rice), this protein is CRS2-associated factor 1, chloroplastic.